The sequence spans 440 residues: RUN domain-containing protein 3A (440 aa).

An RUN domain is found at 52–184 (DDSSEEFVNF…IDFSFCLKGE (133 aa)). Residues 213–233 (DDRESVGGSSSEDSSPEHPYL) form a disordered region. Residues 262 to 317 (YLEELVRLRETQLKNLEAENKRLTQRISEQAEQSLQEKHQLEGVILELQEQLTGLL) adopt a coiled-coil conformation. Residues 374–402 (LSSESQRLDGKQDGEPWGPIGKDPTPSML) form a disordered region.

The protein belongs to the RUNDC3 family.

In Xenopus tropicalis (Western clawed frog), this protein is RUN domain-containing protein 3A (rundc3a).